We begin with the raw amino-acid sequence, 358 residues long: Heme A synthase (358 aa).

8 helical membrane-spanning segments follow: residues L25–G45, L111–G131, M141–S161, I176–V196, F210–G230, V269–V289, T304–M324, and A326–V346. Position 273 (H273) interacts with heme. Position 334 (H334) interacts with heme.

The protein belongs to the COX15/CtaA family. Type 2 subfamily. As to quaternary structure, interacts with CtaB. Requires heme b as cofactor.

The protein localises to the cell membrane. It catalyses the reaction Fe(II)-heme o + 2 A + H2O = Fe(II)-heme a + 2 AH2. Its pathway is porphyrin-containing compound metabolism; heme A biosynthesis; heme A from heme O: step 1/1. Its function is as follows. Catalyzes the conversion of heme O to heme A by two successive hydroxylations of the methyl group at C8. The first hydroxylation forms heme I, the second hydroxylation results in an unstable dihydroxymethyl group, which spontaneously dehydrates, resulting in the formyl group of heme A. The sequence is that of Heme A synthase from Brucella suis (strain ATCC 23445 / NCTC 10510).